A 311-amino-acid polypeptide reads, in one-letter code: Transcriptional repressor scratch 2 (311 aa).

The tract at residues 1–20 is SNAG domain; sequence MPRSFLVKKIKADGFQCSGV. Disordered regions lie at residues 71–90 and 120–156; these read PAYP…PQSS and RRRA…ATAG. A compositionally biased stretch (gly residues) spans 124 to 146; that stretch reads GAGGDAAGAGDAGGGGGGGGGGE. 4 C2H2-type zinc fingers span residues 161–183, 192–214, 218–240, and 246–268; these read HACA…KQTH, RKCP…VLTH, HKCG…MRSH, and FGCA…MQTH. Residues 274–297 form a C2H2-type 5; atypical zinc finger; that stretch reads YRCRQCDKSFALKSYLHKHCEAAC.

The protein belongs to the snail C2H2-type zinc-finger protein family.

The protein resides in the nucleus. In terms of biological role, may be involved in transcriptional regulation. This is Transcriptional repressor scratch 2 (Scrt2) from Mus musculus (Mouse).